We begin with the raw amino-acid sequence, 60 residues long: MDARLLDILVCPICKGPLEHDKKAQELICKADKLAYPIRDGIPIMWADQARDLQVTPGTN.

It belongs to the UPF0434 family.

The sequence is that of UPF0434 protein mma_2578 from Janthinobacterium sp. (strain Marseille) (Minibacterium massiliensis).